The primary structure comprises 482 residues: O-acyltransferase ausP (482 aa).

Active-site proton acceptor residues include H180 and D412.

Belongs to the plant acyltransferase family. As to quaternary structure, monomer.

The protein operates within secondary metabolite biosynthesis; terpenoid biosynthesis. Its function is as follows. O-acyltransferase; part of the gene cluster B that mediates the biosynthesis of the fungal meroterpenoid acetoxydehydroaustin. The first step of the pathway is the synthesis of 3,5-dimethylorsellinic acid by the polyketide synthase ausA. 3,5-dimethylorsellinic acid is then prenylated by the polyprenyl transferase ausN. Further epoxidation by the FAD-dependent monooxygenase ausM and cyclization by the probable terpene cyclase ausL lead to the formation of protoaustinoid A. Protoaustinoid A is then oxidized to spiro-lactone preaustinoid A3 by the combined action of the FAD-binding monooxygenases ausB and ausC, and the dioxygenase ausE. Acid-catalyzed keto-rearrangement and ring contraction of the tetraketide portion of preaustinoid A3 by ausJ lead to the formation of preaustinoid A4. The aldo-keto reductase ausK, with the help of ausH, is involved in the next step by transforming preaustinoid A4 into isoaustinone which is in turn hydroxylated by the P450 monooxygenase ausI to form austinolide. The cytochrome P450 monooxygenase ausG then modifies austinolide to austinol. Austinol is further acetylated to austin by the O-acetyltransferase ausP, which spontaneously changes to dehydroaustin. The cytochrome P450 monooxygenase then converts dehydroaustin is into 7-dehydrodehydroaustin. The hydroxylation catalyzed by ausR permits the second O-acetyltransferase ausQ to add an additional acetyl group to the molecule, leading to the formation of acetoxydehydroaustin. Due to genetic rearrangements of the clusters and the subsequent loss of some enzymes, the end product of the Penicillium brasilianum austinoid biosynthesis clusters is acetoxydehydroaustin. This Penicillium brasilianum protein is O-acyltransferase ausP.